Consider the following 200-residue polypeptide: Endochitinase (200 aa).

E58 serves as the catalytic Proton donor.

The protein belongs to the glycosyl hydrolase 19 family. Chitinase class I subfamily.

It carries out the reaction Random endo-hydrolysis of N-acetyl-beta-D-glucosaminide (1-&gt;4)-beta-linkages in chitin and chitodextrins.. In terms of biological role, this protein functions as a defense against chitin-containing fungal pathogens. This is Endochitinase from Avena sativa (Oat).